Consider the following 341-residue polypeptide: Phenazine O-methyltransferase PhzM (341 aa).

S-adenosyl-L-methionine-binding positions include Asp205 and 231–233; that span reads GDF. The active-site Proton acceptor is His251.

Belongs to the class I-like SAM-binding methyltransferase superfamily. Cation-independent O-methyltransferase family. Homodimer.

It carries out the reaction 1,6-dihydroxyphenazine + S-adenosyl-L-methionine = 1-hydroxy-6-methoxyphenazine + S-adenosyl-L-homocysteine + H(+). The enzyme catalyses 1-hydroxy-6-methoxyphenazine + S-adenosyl-L-methionine = 1,6-dimethoxyphenazine + S-adenosyl-L-homocysteine + H(+). It catalyses the reaction 1-hydroxy-6-methoxyphenazine N(10)-oxide + S-adenosyl-L-methionine = 1,6-dimethoxyphenazine N(5)-oxide + S-adenosyl-L-homocysteine. The catalysed reaction is 1,6-dihydroxyphenazine N(5),N(10)-dioxide + S-adenosyl-L-methionine = 1-hydroxy-6-methoxyphenazine N(5),N(10)-dioxide + S-adenosyl-L-homocysteine. It carries out the reaction 1-hydroxy-6-methoxyphenazine N(5),N(10)-dioxide + S-adenosyl-L-methionine = 1,6-dimethoxyphenazine N(5),N(10)-dioxide + S-adenosyl-L-homocysteine. In terms of biological role, involved in the biosynthesis of phenazine natural products including myxin, an N(5),N(10)-dioxide phenazine antiobiotic, which has antimicrobial activity. O-methyltransferase, which converts iodinin (1,6-dihydroxyphenazine N(5),N(10)-dioxide) to myxin (1-hydroxy-6-methoxyphenazine N(5),N(10)-dioxide). Catalyzes both monomethoxy and dimethoxy formation of phenazine natural compounds. Acts on a wide variety of substrates, catalyzing O-methylation of phenazines with non-, mono- or di-N-oxide. Highest activity with 1,6-dihydroxyphenazine (DHP) as substrate. Less active with monohydroxy-containing and monohydroxy-monomethoxy-containing phenazines. Least active with non-phenazine substrates, such as 8-hydroxyquinoline and 6-hydroxyquinoline. Is not able to convert 1-hydroxyphenazine to 1-hydroxy-N5-methylphenazine (pyocyanine), hence does not function as an N-methyltransferase. In Lysobacter antibioticus, this protein is Phenazine O-methyltransferase PhzM.